Consider the following 339-residue polypeptide: Ketol-acid reductoisomerase (NADP(+)) (339 aa).

Residues 1–182 (MRVYYDRDAD…GGGRSGIIET (182 aa)) enclose the KARI N-terminal Rossmann domain. NADP(+)-binding positions include 24-27 (YGSQ), R48, S51, S53, and 83-86 (DELQ). Residue H108 is part of the active site. G134 contributes to the NADP(+) binding site. The 146-residue stretch at 183–328 (TFREECETDL…GRLRAMMPWI (146 aa)) folds into the KARI C-terminal knotted domain. Mg(2+)-binding residues include D191, E195, E227, and E231. A substrate-binding site is contributed by S252.

It belongs to the ketol-acid reductoisomerase family. It depends on Mg(2+) as a cofactor.

It carries out the reaction (2R)-2,3-dihydroxy-3-methylbutanoate + NADP(+) = (2S)-2-acetolactate + NADPH + H(+). The catalysed reaction is (2R,3R)-2,3-dihydroxy-3-methylpentanoate + NADP(+) = (S)-2-ethyl-2-hydroxy-3-oxobutanoate + NADPH + H(+). Its pathway is amino-acid biosynthesis; L-isoleucine biosynthesis; L-isoleucine from 2-oxobutanoate: step 2/4. The protein operates within amino-acid biosynthesis; L-valine biosynthesis; L-valine from pyruvate: step 2/4. In terms of biological role, involved in the biosynthesis of branched-chain amino acids (BCAA). Catalyzes an alkyl-migration followed by a ketol-acid reduction of (S)-2-acetolactate (S2AL) to yield (R)-2,3-dihydroxy-isovalerate. In the isomerase reaction, S2AL is rearranged via a Mg-dependent methyl migration to produce 3-hydroxy-3-methyl-2-ketobutyrate (HMKB). In the reductase reaction, this 2-ketoacid undergoes a metal-dependent reduction by NADPH to yield (R)-2,3-dihydroxy-isovalerate. In Rhodospirillum rubrum (strain ATCC 11170 / ATH 1.1.1 / DSM 467 / LMG 4362 / NCIMB 8255 / S1), this protein is Ketol-acid reductoisomerase (NADP(+)).